A 1203-amino-acid polypeptide reads, in one-letter code: ATP-dependent helicase/nuclease subunit A (1203 aa).

The region spanning 4 to 472 (VKLTPEQNEA…IRLKENFRSR (469 aa)) is the UvrD-like helicase ATP-binding domain. 25–32 (ASAGSGKT) is an ATP binding site. Positions 503–785 (VQGNITDYPV…RVMTFHKSKG (283 aa)) constitute a UvrD-like helicase C-terminal domain.

Belongs to the helicase family. AddA subfamily. Heterodimer of AddA and AddB/RexB. Mg(2+) serves as cofactor.

The enzyme catalyses Couples ATP hydrolysis with the unwinding of duplex DNA by translocating in the 3'-5' direction.. It catalyses the reaction ATP + H2O = ADP + phosphate + H(+). Functionally, the heterodimer acts as both an ATP-dependent DNA helicase and an ATP-dependent, dual-direction single-stranded exonuclease. Recognizes the chi site generating a DNA molecule suitable for the initiation of homologous recombination. The AddA nuclease domain is required for chi fragment generation; this subunit has the helicase and 3' -&gt; 5' nuclease activities. This chain is ATP-dependent helicase/nuclease subunit A, found in Lactococcus lactis subsp. lactis (strain IL1403) (Streptococcus lactis).